Here is a 236-residue protein sequence, read N- to C-terminus: Probable chemoreceptor glutamine deamidase CheD (236 aa).

Positions 1–20 (MIEFGKRATPQSAADAVRGD) are disordered.

Belongs to the CheD family.

The enzyme catalyses L-glutaminyl-[protein] + H2O = L-glutamyl-[protein] + NH4(+). In terms of biological role, probably deamidates glutamine residues to glutamate on methyl-accepting chemotaxis receptors (MCPs), playing an important role in chemotaxis. The polypeptide is Probable chemoreceptor glutamine deamidase CheD (Ralstonia pickettii (strain 12J)).